A 111-amino-acid chain; its full sequence is T cell receptor alpha variable 18 (111 aa).

The first 20 residues, 1 to 20, serve as a signal peptide directing secretion; that stretch reads MLSASCSGLVILLIFRRTSG. Residues 21-111 form the Ig-like domain; that stretch reads DSVTQTEGPV…DSAVYYCALR (91 aa). Asn-41 carries N-linked (GlcNAc...) asparagine glycosylation. An intrachain disulfide couples Cys-42 to Cys-108.

As to quaternary structure, alpha-beta TR is a heterodimer composed of an alpha and beta chain; disulfide-linked. The alpha-beta TR is associated with the transmembrane signaling CD3 coreceptor proteins to form the TR-CD3 (TcR or TCR). The assembly of alpha-beta TR heterodimers with CD3 occurs in the endoplasmic reticulum where a single alpha-beta TR heterodimer associates with one CD3D-CD3E heterodimer, one CD3G-CD3E heterodimer and one CD247 homodimer forming a stable octameric structure. CD3D-CD3E and CD3G-CD3E heterodimers preferentially associate with TR alpha and TR beta chains, respectively. The association of the CD247 homodimer is the last step of TcR assembly in the endoplasmic reticulum and is required for transport to the cell surface.

The protein resides in the cell membrane. In terms of biological role, v region of the variable domain of T cell receptor (TR) alpha chain that participates in the antigen recognition. Alpha-beta T cell receptors are antigen specific receptors which are essential to the immune response and are present on the cell surface of T lymphocytes. Recognize peptide-major histocompatibility (MH) (pMH) complexes that are displayed by antigen presenting cells (APC), a prerequisite for efficient T cell adaptive immunity against pathogens. Binding of alpha-beta TR to pMH complex initiates TR-CD3 clustering on the cell surface and intracellular activation of LCK that phosphorylates the ITAM motifs of CD3G, CD3D, CD3E and CD247 enabling the recruitment of ZAP70. In turn ZAP70 phosphorylates LAT, which recruits numerous signaling molecules to form the LAT signalosome. The LAT signalosome propagates signal branching to three major signaling pathways, the calcium, the mitogen-activated protein kinase (MAPK) kinase and the nuclear factor NF-kappa-B (NF-kB) pathways, leading to the mobilization of transcription factors that are critical for gene expression and essential for T cell growth and differentiation. The T cell repertoire is generated in the thymus, by V-(D)-J rearrangement. This repertoire is then shaped by intrathymic selection events to generate a peripheral T cell pool of self-MH restricted, non-autoaggressive T cells. Post-thymic interaction of alpha-beta TR with the pMH complexes shapes TR structural and functional avidity. This chain is T cell receptor alpha variable 18, found in Homo sapiens (Human).